The chain runs to 428 residues: C4-dicarboxylate transport protein (428 aa).

The next 9 helical transmembrane spans lie at 8-28 (SLYF…HFYP), 44-64 (LIKM…IAGM), 76-96 (VALL…LVIV), 142-162 (IGAF…LFGF), 184-204 (VIFG…FGAM), 222-242 (LIVC…GSIA), 289-309 (VVGL…SIYL), 326-346 (IFHQ…AAGV), and 352-372 (IVLA…LALI).

It belongs to the dicarboxylate/amino acid:cation symporter (DAACS) (TC 2.A.23) family.

Its subcellular location is the cell inner membrane. Its function is as follows. Responsible for the transport of dicarboxylates such as succinate, fumarate, and malate from the periplasm across the membrane. The chain is C4-dicarboxylate transport protein from Cronobacter sakazakii (strain ATCC BAA-894) (Enterobacter sakazakii).